Here is a 222-residue protein sequence, read N- to C-terminus: 7-cyano-7-deazaguanine synthase (222 aa).

Residue 14–24 (FSGGQDSTTCL) participates in ATP binding. Zn(2+) contacts are provided by cysteine 192, cysteine 201, cysteine 204, and cysteine 207.

This sequence belongs to the QueC family. As to quaternary structure, homodimer. It depends on Zn(2+) as a cofactor.

It catalyses the reaction 7-carboxy-7-deazaguanine + NH4(+) + ATP = 7-cyano-7-deazaguanine + ADP + phosphate + H2O + H(+). Its pathway is purine metabolism; 7-cyano-7-deazaguanine biosynthesis. Functionally, catalyzes the ATP-dependent conversion of 7-carboxy-7-deazaguanine (CDG) to 7-cyano-7-deazaguanine (preQ(0)). This Clostridium acetobutylicum (strain ATCC 824 / DSM 792 / JCM 1419 / IAM 19013 / LMG 5710 / NBRC 13948 / NRRL B-527 / VKM B-1787 / 2291 / W) protein is 7-cyano-7-deazaguanine synthase.